A 107-amino-acid polypeptide reads, in one-letter code: DNA-directed RNA polymerase subunit omega (107 aa).

This sequence belongs to the RNA polymerase subunit omega family. In terms of assembly, the RNAP catalytic core consists of 2 alpha, 1 beta, 1 beta' and 1 omega subunit. When a sigma factor is associated with the core the holoenzyme is formed, which can initiate transcription.

The catalysed reaction is RNA(n) + a ribonucleoside 5'-triphosphate = RNA(n+1) + diphosphate. In terms of biological role, promotes RNA polymerase assembly. Latches the N- and C-terminal regions of the beta' subunit thereby facilitating its interaction with the beta and alpha subunits. This Mycolicibacterium smegmatis (strain ATCC 700084 / mc(2)155) (Mycobacterium smegmatis) protein is DNA-directed RNA polymerase subunit omega.